A 56-amino-acid chain; its full sequence is Prokaryotic ubiquitin-like protein UBact (56 aa).

Positions Met1–Gln56 are disordered. Positions Lys26–Lys48 are enriched in basic and acidic residues. Gln56 carries the post-translational modification Deamidated glutamine. Gln56 is covalently cross-linked (Isoglutamyl lysine isopeptide (Gln-Lys) (interchain with K-? in acceptor proteins)).

This sequence belongs to the ubiquitin-like protein UBact family. May be modified by deamidation of its C-terminal glutamine to glutamate by the adjacently encoded deamidase. This could be a prerequisite to the subsequent conjugation, as shown in the other prokaryotic ubiquitin-like protein Pup.

In terms of biological role, may function as a protein modifier covalently attached to lysine residues of substrate proteins. This may serve to target the modified proteins for degradation by proteasomes. The chain is Prokaryotic ubiquitin-like protein UBact from Pedosphaera parvula (strain Ellin514).